A 342-amino-acid chain; its full sequence is Ankyrin repeat domain-containing protein 2A (342 aa).

The interval 1-41 is disordered; sequence MASNSEKNPLLSDEKPKSTEENKSSKPESASGSSTSSAMPG. Residues 12–26 are compositionally biased toward basic and acidic residues; it reads SDEKPKSTEENKSSK. The segment covering 27–37 has biased composition (low complexity); it reads PESASGSSTSS. 4 ANK repeats span residues 217-246, 250-279, 283-312, and 316-342; these read EEES…NKDE, EGRT…SVNA, NKNT…AVTL, and DEKT…DAFL. Residues His223 and Glu246 each contribute to the a 1,2-diacyl-3-O-(beta-D-galactosyl)-sn-glycerol site. Residues Tyr294 and Arg296 each coordinate a 1,2-diacyl-sn-glycero-3-phospho-(1'-sn-glycerol).

Interacts with TOM20-4, CYTB5-E, CBR1, APX3, APX5, TOC34 and GRF6. Binds to chloroplast outer envelope membrane (OEM) protein targeting signals, as well as to chloroplasts. Interacts with OEP7. Binds to HSP17.8 via its ankyrin repeats, this interaction enhances chaperone activity and chloroplast binding. Also interacts with HSP17.4A, HSP17.6A and HSP18.1. Binds specifically to two chloroplast glycolipids, monogalactosyldiacylglycerol (MGDG) and phosphatidylglycerol (PG). Ubiquitously expressed at basal level.

The protein localises to the cytoplasm. Its subcellular location is the nucleus. The protein resides in the plastid. It localises to the chloroplast outer membrane. Functionally, exhibits chaperone activity toward chloroplast outer envelope membrane, mitochondrion outer membrane, endoplasmic reticulum membrane and peroxisomal proteins, by recruiting specific proteins containing a single transmembrane associated with an AKR2A-binding sequence (ABS) and subsequently binding glycolipids (e.g. monogalactosyldiacylglycerol (MGDG) and phosphatidylglycerol (PG)) present in the membrane of the target organelle. Seems to be involved in the regulation of hydrogen peroxide levels during biotic and abiotic stresses by optimizing the ascorbate peroxidase 3 (APX3) hydrogen peroxide-degrading activity. This regulation might be monitored by GRF6. Cytosolic targeting factor for chloroplast outer membrane (COM) proteins that mediates sorting and targeting of nascent chloroplast outer envelope membrane (OEM) proteins to the chloroplast. Facilitates the targeting of OEP7 to chloroplasts. Facilitates the targeting of APX3 to peroxisomes. Involved in cellular metabolism (e.g. peroxisome activity) and required for plant growth and development. The sequence is that of Ankyrin repeat domain-containing protein 2A from Arabidopsis thaliana (Mouse-ear cress).